The primary structure comprises 354 residues: Serine/threonine-protein phosphatase 2A activator 2 (354 aa).

The protein belongs to the PTPA-type PPIase family.

Its subcellular location is the cytoplasm. It catalyses the reaction [protein]-peptidylproline (omega=180) = [protein]-peptidylproline (omega=0). PPIases accelerate the folding of proteins. It catalyzes the cis-trans isomerization of proline imidic peptide bonds in oligopeptides. Acts as a regulatory subunit for PP2A-like phosphatases modulating their activity or substrate specificity, probably by inducing a conformational change in the catalytic subunit, a direct target of the PPIase. Can reactivate inactive phosphatase PP2A-phosphatase methylesterase complexes (PP2Ai) in presence of ATP and Mg(2+) by dissociating the inactive form from the complex. The polypeptide is Serine/threonine-protein phosphatase 2A activator 2 (RRD2) (Yarrowia lipolytica (strain CLIB 122 / E 150) (Yeast)).